Here is a 405-residue protein sequence, read N- to C-terminus: uncharacterized protein (405 aa).

Transmembrane regions (helical) follow at residues 19–39, 47–67, 85–105, 107–127, 156–176, 178–198, 224–244, 252–272, 283–303, 309–329, 344–364, and 366–386; these read IVSI…PLAV, VMGF…FATL, IVVF…TAGL, ASLP…LGIG, GIVT…FYHW, GLQA…LLAI, GMAL…ITLF, GAAF…LLFP, VAMI…VATM, IGVL…GVVA, TYTV…GLVM, and WAGV…ALLL.

It belongs to the major facilitator superfamily. YhhS family.

It localises to the cell inner membrane. This is an uncharacterized protein from Escherichia coli O6:H1 (strain CFT073 / ATCC 700928 / UPEC).